A 338-amino-acid chain; its full sequence is DNA-directed RNA polymerase subunit alpha (338 aa).

Positions 1–234 are alpha N-terminal domain (alpha-NTD); sequence MIQKNWQELI…DQLEIFVNFE (234 aa). Residues 250–338 form an alpha C-terminal domain (alpha-CTD) region; sequence FSPALLKKVD…ELAKRFEEHY (89 aa).

It belongs to the RNA polymerase alpha chain family. In terms of assembly, homodimer. The RNAP catalytic core consists of 2 alpha, 1 beta, 1 beta' and 1 omega subunit. When a sigma factor is associated with the core the holoenzyme is formed, which can initiate transcription.

It catalyses the reaction RNA(n) + a ribonucleoside 5'-triphosphate = RNA(n+1) + diphosphate. Functionally, DNA-dependent RNA polymerase catalyzes the transcription of DNA into RNA using the four ribonucleoside triphosphates as substrates. The sequence is that of DNA-directed RNA polymerase subunit alpha from Xanthobacter autotrophicus (strain ATCC BAA-1158 / Py2).